A 192-amino-acid polypeptide reads, in one-letter code: Large ribosomal subunit protein uL18 (192 aa).

The protein belongs to the universal ribosomal protein uL18 family. In terms of assembly, part of the 50S ribosomal subunit. Contacts the 5S and 23S rRNAs.

Functionally, this is one of the proteins that bind and probably mediate the attachment of the 5S RNA into the large ribosomal subunit, where it forms part of the central protuberance. The polypeptide is Large ribosomal subunit protein uL18 (Methanothermobacter thermautotrophicus (strain ATCC 29096 / DSM 1053 / JCM 10044 / NBRC 100330 / Delta H) (Methanobacterium thermoautotrophicum)).